An 893-amino-acid polypeptide reads, in one-letter code: cGMP-specific 3',5'-cyclic phosphodiesterase (893 aa).

2 GAF domains span residues 21–173 (DIDV…GIGI) and 205–390 (NLEC…GLGI). A PDEase domain is found at 420-743 (GQDQTEKLIQ…RNWQDLAEKV (324 aa)). Residue H496 is the Proton donor of the active site. Residues H500, H536, D537, and D647 each contribute to the a divalent metal cation site. 2 disordered regions span residues 784 to 807 (QQSQ…RLSI) and 844 to 893 (HVSE…CALL). Composition is skewed to basic and acidic residues over residues 789-800 (GGDDSHTPEHQR) and 844-853 (HVSEDMDDKS). Residues 864–880 (SVGRMSASSSTSSAGTV) show a composition bias toward low complexity. The span at 883-893 (SKKRSKLCALL) shows a compositional bias: basic residues. C890 is modified (cysteine methyl ester). C890 carries S-farnesyl cysteine lipidation. Residues 891 to 893 (ALL) constitute a propeptide, removed in mature form.

This sequence belongs to the cyclic nucleotide phosphodiesterase family. Interacts with PrBP. A divalent metal cation serves as cofactor.

It is found in the cell membrane. The catalysed reaction is 3',5'-cyclic GMP + H2O = GMP + H(+). In terms of biological role, has a role regulating cGMP transport in Malpighian tubule principal cells. This is cGMP-specific 3',5'-cyclic phosphodiesterase from Drosophila virilis (Fruit fly).